The primary structure comprises 239 residues: Ribosomal RNA small subunit methyltransferase G (239 aa).

S-adenosyl-L-methionine contacts are provided by residues Gly-77, Phe-82, 128–129, and Arg-146; that span reads AE. Residues 215–239 form a disordered region; sequence DKRSQTPKKYPRKPGTPNKSPLLEK.

Belongs to the methyltransferase superfamily. RNA methyltransferase RsmG family.

Its subcellular location is the cytoplasm. Functionally, specifically methylates the N7 position of guanine in position 535 of 16S rRNA. In Staphylococcus saprophyticus subsp. saprophyticus (strain ATCC 15305 / DSM 20229 / NCIMB 8711 / NCTC 7292 / S-41), this protein is Ribosomal RNA small subunit methyltransferase G.